The sequence spans 181 residues: Alkyl hydroperoxide reductase AhpD (181 aa).

Residue cysteine 131 is the Proton donor of the active site. A disulfide bridge connects residues cysteine 131 and cysteine 134. Residue cysteine 134 is the Cysteine sulfenic acid (-SOH) intermediate of the active site.

This sequence belongs to the AhpD family.

The catalysed reaction is N(6)-[(R)-dihydrolipoyl]-L-lysyl-[lipoyl-carrier protein] + a hydroperoxide = N(6)-[(R)-lipoyl]-L-lysyl-[lipoyl-carrier protein] + an alcohol + H2O. Functionally, antioxidant protein with alkyl hydroperoxidase activity. Required for the reduction of the AhpC active site cysteine residues and for the regeneration of the AhpC enzyme activity. The sequence is that of Alkyl hydroperoxide reductase AhpD from Bradyrhizobium sp. (strain ORS 278).